The primary structure comprises 211 residues: Metalloproteinase inhibitor 3 (211 aa).

The N-terminal stretch at 1 to 23 (MTPWLGLVVLLGSWSLGDWGAEA) is a signal peptide. Position 24 (Cys24) interacts with Zn(2+). Involved in metalloproteinase-binding stretches follow at residues 24–27 (CTCS) and 88–89 (ES). 6 disulfide bridges follow: Cys24-Cys91, Cys26-Cys118, Cys36-Cys143, Cys145-Cys192, Cys150-Cys155, and Cys163-Cys184. The NTR domain occupies 24 to 143 (CTCSPSHPQD…GLNYRYHLGC (120 aa)). Residues 105 to 188 (TGRVYDGKMY…SKHYACIRQK (84 aa)) form a mediates interaction with EFEMP1 region. N-linked (GlcNAc...) asparagine glycosylation occurs at Asn207.

This sequence belongs to the protease inhibitor I35 (TIMP) family. In terms of assembly, interacts with EFEMP1. Interacts with KDR.

It localises to the secreted. The protein resides in the extracellular space. The protein localises to the extracellular matrix. In terms of biological role, mediates a variety of processes including matrix regulation and turnover, inflammation, and angiogenesis, through reversible inhibition of zinc protease superfamily enzymes, primarily matrix metalloproteinases (MMPs). Regulates extracellular matrix (ECM) remodeling through inhibition of matrix metalloproteinases (MMP) including MMP-1, MMP-2, MMP-3, MMP-7, MMP-9, MMP-13, MMP-14 and MMP-15. Additionally, modulates the processing of amyloid precursor protein (APP) and apolipoprotein E receptor ApoER2 by inhibiting two alpha-secretases ADAM10 and ADAM17. Functions as a tumor suppressor and a potent inhibitor of angiogenesis. Exerts its anti-angiogenic effect by directly interacting with vascular endothelial growth factor (VEGF) receptor-2/KDR, preventing its binding to the VEGFA ligand. Selectively induces apoptosis in angiogenic endothelial cells through a caspase-independent cell death pathway. Mechanistically, inhibits matrix-induced focal adhesion kinase PTK2 tyrosine phosphorylation and association with paxillin/PXN and disrupts the incorporation of ITGB3, PTK2 and PXN into focal adhesion contacts on the matrix. In Equus caballus (Horse), this protein is Metalloproteinase inhibitor 3 (TIMP3).